Reading from the N-terminus, the 140-residue chain is Nucleoside diphosphate kinase (140 aa).

Residues lysine 11, phenylalanine 59, arginine 87, threonine 93, arginine 104, and asparagine 114 each coordinate ATP. The active-site Pros-phosphohistidine intermediate is the histidine 117.

It belongs to the NDK family. Homotetramer. It depends on Mg(2+) as a cofactor.

It is found in the cytoplasm. It catalyses the reaction a 2'-deoxyribonucleoside 5'-diphosphate + ATP = a 2'-deoxyribonucleoside 5'-triphosphate + ADP. The enzyme catalyses a ribonucleoside 5'-diphosphate + ATP = a ribonucleoside 5'-triphosphate + ADP. Major role in the synthesis of nucleoside triphosphates other than ATP. The ATP gamma phosphate is transferred to the NDP beta phosphate via a ping-pong mechanism, using a phosphorylated active-site intermediate. The sequence is that of Nucleoside diphosphate kinase from Gluconobacter oxydans (strain 621H) (Gluconobacter suboxydans).